A 152-amino-acid polypeptide reads, in one-letter code: Lipoprotein signal peptidase (152 aa).

Helical transmembrane passes span 5–25 (LFVL…FWIV), 61–81 (WFFV…LATH), and 84–104 (LNIW…GNFI). Residues Asp-114 and Asp-130 contribute to the active site. Residues 125–145 (IFNVADSYLTVGVILLLICLW) form a helical membrane-spanning segment.

It belongs to the peptidase A8 family.

The protein localises to the cell membrane. The enzyme catalyses Release of signal peptides from bacterial membrane prolipoproteins. Hydrolyzes -Xaa-Yaa-Zaa-|-(S,diacylglyceryl)Cys-, in which Xaa is hydrophobic (preferably Leu), and Yaa (Ala or Ser) and Zaa (Gly or Ala) have small, neutral side chains.. Its pathway is protein modification; lipoprotein biosynthesis (signal peptide cleavage). In terms of biological role, this protein specifically catalyzes the removal of signal peptides from prolipoproteins. The protein is Lipoprotein signal peptidase of Streptococcus pyogenes serotype M1.